A 264-amino-acid chain; its full sequence is S-adenosylmethionine decarboxylase proenzyme (264 aa).

Ser-112 (schiff-base intermediate with substrate; via pyruvic acid) is an active-site residue. Pyruvic acid (Ser); by autocatalysis is present on Ser-112. The active-site Proton acceptor; for processing activity is His-117. Cys-140 acts as the Proton donor; for catalytic activity in catalysis.

This sequence belongs to the prokaryotic AdoMetDC family. Type 2 subfamily. Heterooctamer of four alpha and four beta chains arranged as a tetramer of alpha/beta heterodimers. It depends on pyruvate as a cofactor. Post-translationally, is synthesized initially as an inactive proenzyme. Formation of the active enzyme involves a self-maturation process in which the active site pyruvoyl group is generated from an internal serine residue via an autocatalytic post-translational modification. Two non-identical subunits are generated from the proenzyme in this reaction, and the pyruvate is formed at the N-terminus of the alpha chain, which is derived from the carboxyl end of the proenzyme. The post-translation cleavage follows an unusual pathway, termed non-hydrolytic serinolysis, in which the side chain hydroxyl group of the serine supplies its oxygen atom to form the C-terminus of the beta chain, while the remainder of the serine residue undergoes an oxidative deamination to produce ammonia and the pyruvoyl group blocking the N-terminus of the alpha chain.

The enzyme catalyses S-adenosyl-L-methionine + H(+) = S-adenosyl 3-(methylsulfanyl)propylamine + CO2. Its pathway is amine and polyamine biosynthesis; S-adenosylmethioninamine biosynthesis; S-adenosylmethioninamine from S-adenosyl-L-methionine: step 1/1. Functionally, catalyzes the decarboxylation of S-adenosylmethionine to S-adenosylmethioninamine (dcAdoMet), the propylamine donor required for the synthesis of the polyamines spermine and spermidine from the diamine putrescine. The chain is S-adenosylmethionine decarboxylase proenzyme from Shigella boydii serotype 4 (strain Sb227).